A 545-amino-acid chain; its full sequence is ATP synthase subunit alpha (545 aa).

173 to 180 lines the ATP pocket; that stretch reads GDRQTGKT.

This sequence belongs to the ATPase alpha/beta chains family. F-type ATPases have 2 components, CF(1) - the catalytic core - and CF(0) - the membrane proton channel. CF(1) has five subunits: alpha(3), beta(3), gamma(1), delta(1), epsilon(1). CF(0) has three main subunits: a(1), b(2) and c(9-12). The alpha and beta chains form an alternating ring which encloses part of the gamma chain. CF(1) is attached to CF(0) by a central stalk formed by the gamma and epsilon chains, while a peripheral stalk is formed by the delta and b chains.

The protein localises to the cell membrane. It carries out the reaction ATP + H2O + 4 H(+)(in) = ADP + phosphate + 5 H(+)(out). Produces ATP from ADP in the presence of a proton gradient across the membrane. The alpha chain is a regulatory subunit. This chain is ATP synthase subunit alpha, found in Paenarthrobacter aurescens (strain TC1).